Here is a 206-residue protein sequence, read N- to C-terminus: Dephospho-CoA kinase (206 aa).

In terms of domain architecture, DPCK spans 6 to 206 (IIGLTGGIAS…KWKWKDWSKK (201 aa)). Position 14-19 (14-19 (ASGKST)) interacts with ATP.

It belongs to the CoaE family.

Its subcellular location is the cytoplasm. The catalysed reaction is 3'-dephospho-CoA + ATP = ADP + CoA + H(+). It functions in the pathway cofactor biosynthesis; coenzyme A biosynthesis; CoA from (R)-pantothenate: step 5/5. In terms of biological role, catalyzes the phosphorylation of the 3'-hydroxyl group of dephosphocoenzyme A to form coenzyme A. In Carboxydothermus hydrogenoformans (strain ATCC BAA-161 / DSM 6008 / Z-2901), this protein is Dephospho-CoA kinase.